A 603-amino-acid polypeptide reads, in one-letter code: Polypeptide N-acetylgalactosaminyltransferase 10 (603 aa).

Over 1–11 (MRRKEKRLLQA) the chain is Cytoplasmic. A helical; Signal-anchor for type II membrane protein membrane pass occupies residues 12-31 (VALALAALVLLPNVGLWALY). Residues 32 to 603 (RERQPDGSPG…STVLENFNRN (572 aa)) lie on the Lumenal side of the membrane. N124 and N146 each carry an N-linked (GlcNAc...) asparagine glycan. Intrachain disulfides connect C135/C365, C356/C432, C471/C488, C523/C538, and C563/C578. Residues 144–253 (LPNTSIIIPF…VNWLPPLLDR (110 aa)) are catalytic subdomain A. Positions 185 and 214 each coordinate substrate. Position 237 (D237) interacts with Mn(2+). S238 serves as a coordination point for substrate. H239 contributes to the Mn(2+) binding site. The catalytic subdomain B stretch occupies residues 311–373 (PFESPVMAGG…PCSRVGHIYR (63 aa)). Residue W342 participates in substrate binding. H370 contributes to the Mn(2+) binding site. Substrate contacts are provided by R373 and Y378. The segment at 373–384 (RKYVPYKVPAGV) is flexible loop. The Ricin B-type lectin domain occupies 458 to 590 (AAWGEIRNVG…SSLTQQWLFE (133 aa)). N-linked (GlcNAc...) asparagine glycosylation occurs at N593.

This sequence belongs to the glycosyltransferase 2 family. GalNAc-T subfamily. The cofactor is Mn(2+). As to expression, highly expressed in the sublingual gland, testis, small intestine, colon and ovary. Expressed at intermediate level in heart, brain, spleen, lung, stomach, cervix and uterus.

It localises to the golgi apparatus membrane. The enzyme catalyses L-seryl-[protein] + UDP-N-acetyl-alpha-D-galactosamine = a 3-O-[N-acetyl-alpha-D-galactosaminyl]-L-seryl-[protein] + UDP + H(+). The catalysed reaction is L-threonyl-[protein] + UDP-N-acetyl-alpha-D-galactosamine = a 3-O-[N-acetyl-alpha-D-galactosaminyl]-L-threonyl-[protein] + UDP + H(+). It functions in the pathway protein modification; protein glycosylation. In terms of biological role, catalyzes the initial reaction in O-linked oligosaccharide biosynthesis, the transfer of an N-acetyl-D-galactosamine residue to a serine or threonine residue on the protein receptor. Has activity toward Muc5Ac and EA2 peptide substrates. The sequence is that of Polypeptide N-acetylgalactosaminyltransferase 10 (Galnt10) from Rattus norvegicus (Rat).